Consider the following 260-residue polypeptide: DNA repair protein RecO (260 aa).

This sequence belongs to the RecO family.

Functionally, involved in DNA repair and RecF pathway recombination. This is DNA repair protein RecO from Levilactobacillus brevis (strain ATCC 367 / BCRC 12310 / CIP 105137 / JCM 1170 / LMG 11437 / NCIMB 947 / NCTC 947) (Lactobacillus brevis).